A 173-amino-acid chain; its full sequence is ATP synthase subunit d, mitochondrial (173 aa).

Residues M1–G23 constitute a mitochondrion transit peptide.

This sequence belongs to the ATPase d subunit family. F-type ATPases have 2 components, CF(1) - the catalytic core - and CF(0) - the membrane proton channel. In yeast, the dimeric form of ATP synthase consists of 17 polypeptides: alpha, beta, gamma, delta, epsilon, 4 (B), 5 (OSCP), 6 (A), 8, 9 (C), d, E (Tim11), f, g, h, i/j and k.

It is found in the mitochondrion inner membrane. In terms of biological role, mitochondrial membrane ATP synthase (F(1)F(0) ATP synthase or Complex V) produces ATP from ADP in the presence of a proton gradient across the membrane which is generated by electron transport complexes of the respiratory chain. F-type ATPases consist of two structural domains, F(1) - containing the extramembraneous catalytic core, and F(0) - containing the membrane proton channel, linked together by a central stalk and a peripheral stalk. During catalysis, ATP synthesis in the catalytic domain of F(1) is coupled via a rotary mechanism of the central stalk subunits to proton translocation. Part of the complex F(0) domain and the peripheric stalk, which acts as a stator to hold the catalytic alpha(3)beta(3) subcomplex and subunit a/ATP6 static relative to the rotary elements. This chain is ATP synthase subunit d, mitochondrial (atp7), found in Aspergillus terreus (strain NIH 2624 / FGSC A1156).